A 398-amino-acid polypeptide reads, in one-letter code: Aspartic protease 3 (398 aa).

Positions 1 to 17 are cleaved as a signal peptide; it reads MSGRVFLLLALVALASA. A propeptide spans 18-55 (removed in mature form); it reads IQRIKLEKRTYTREQYKFGSIQEHLKAKYVPGYIPNKD. The region spanning 69-392 is the Peptidase A1 domain; sequence YYGPVTIGTP…DHGNKRVGFA (324 aa). Asp87 is an active-site residue. The cysteines at positions 100 and 107 are disulfide-linked. The active site involves Asp279. Cys313 and Cys351 form a disulfide bridge. A glycan (N-linked (GlcNAc...) asparagine) is linked at Asn321.

It belongs to the peptidase A1 family. As to expression, highly expressed in intestine and to a lower extent in body wall muscles, hypodermis and neurons.

The protein resides in the cytoplasm. The protein localises to the lysosome. It is found in the secreted. In terms of biological role, aspartic protease. Part of the necrosis cell death pathway. Involved in neuronal cell degeneration. Involved in heat stress response. This Caenorhabditis elegans protein is Aspartic protease 3.